The primary structure comprises 554 residues: Glucose-6-phosphate isomerase (554 aa).

The active-site Proton donor is Glu-359. Active-site residues include His-390 and Lys-518.

This sequence belongs to the GPI family.

The protein resides in the cytoplasm. It catalyses the reaction alpha-D-glucose 6-phosphate = beta-D-fructose 6-phosphate. Its pathway is carbohydrate biosynthesis; gluconeogenesis. The protein operates within carbohydrate degradation; glycolysis; D-glyceraldehyde 3-phosphate and glycerone phosphate from D-glucose: step 2/4. In terms of biological role, catalyzes the reversible isomerization of glucose-6-phosphate to fructose-6-phosphate. The protein is Glucose-6-phosphate isomerase of Pseudomonas fluorescens (strain Pf0-1).